Consider the following 511-residue polypeptide: Alpha-amylase 1 (511 aa).

Residues 1-15 (MKFFLLLSLIGFCWA) form the signal peptide. Position 16 is a pyrrolidone carboxylic acid (Gln16). Intrachain disulfides connect Cys43/Cys101, Cys85/Cys130, and Cys156/Cys175. Asn115, Arg173, and Asp182 together coordinate Ca(2+). Residue Arg210 coordinates chloride. Asp212 serves as the catalytic Nucleophile. His216 contacts Ca(2+). Glu248 acts as the Proton donor in catalysis. Asn313 and Arg352 together coordinate chloride. Disulfide bonds link Cys393-Cys399 and Cys465-Cys477.

Belongs to the glycosyl hydrolase 13 family. As to quaternary structure, monomer. Requires Ca(2+) as cofactor. The cofactor is chloride. As to expression, expressed in liver and saliva.

It is found in the secreted. The catalysed reaction is Endohydrolysis of (1-&gt;4)-alpha-D-glucosidic linkages in polysaccharides containing three or more (1-&gt;4)-alpha-linked D-glucose units.. The sequence is that of Alpha-amylase 1 (Amy1) from Mus musculus (Mouse).